A 598-amino-acid polypeptide reads, in one-letter code: Elongation factor 4 (598 aa).

The region spanning 3–185 is the tr-type G domain; the sequence is QHIRNFSIIA…MIVAQIPPPE (183 aa). Residues 15–20 and 132–135 each bind GTP; these read DHGKST and NKID.

It belongs to the TRAFAC class translation factor GTPase superfamily. Classic translation factor GTPase family. LepA subfamily.

Its subcellular location is the cell inner membrane. The catalysed reaction is GTP + H2O = GDP + phosphate + H(+). Its function is as follows. Required for accurate and efficient protein synthesis under certain stress conditions. May act as a fidelity factor of the translation reaction, by catalyzing a one-codon backward translocation of tRNAs on improperly translocated ribosomes. Back-translocation proceeds from a post-translocation (POST) complex to a pre-translocation (PRE) complex, thus giving elongation factor G a second chance to translocate the tRNAs correctly. Binds to ribosomes in a GTP-dependent manner. The polypeptide is Elongation factor 4 (Nitrosomonas europaea (strain ATCC 19718 / CIP 103999 / KCTC 2705 / NBRC 14298)).